We begin with the raw amino-acid sequence, 462 residues long: MICIFLFLGFYMQYQTTIAAIATPPGRGGVGVIRLSGPKASLIAEHLTAKTLPAARMAGFRQFYDAEGLVMDEGLVLYFPNPNSFTGEDVVELQGHGGPVIQNALLERLFELGAKAAKAGEFSMRAFENGKLDLVQAEAIADLIDATSQAAARSAVRSLQGAFSLRINQVLEKLIHLRLHVEAAIDFPEEEIDFLADGKILALLDDVRDSVQQVQTSARQGQLLREGLQVVIAGKPNAGKSSLLNALAGNERAIVTDIAGTTRDVLHERISLNGLPITLTDTAGLRETGDIVEKEGIRRAIKEIEQADLLLLVYDLSEGADPLALAQEYFAEHLEPRRLILIGNKCDLMTGHPELAQYQNFRHVTVSAKMDMGVQALIDAITAHAGFQPEEDTFIARTRHLDAMKRTQLHLHEAREQLVVFHAGELVAESLRLAQNALSEITGEFSADDLLGKIFGSFCIGK.

Arginine 34, glutamate 92, and lysine 131 together coordinate (6S)-5-formyl-5,6,7,8-tetrahydrofolate. Residues glycine 227–glycine 386 form the TrmE-type G domain. A K(+)-binding site is contributed by asparagine 237. GTP is bound by residues asparagine 237–serine 242, threonine 256–threonine 262, and aspartate 281–glycine 284. Residue serine 241 participates in Mg(2+) binding. Residues threonine 256, isoleucine 258, and threonine 261 each coordinate K(+). Threonine 262 contributes to the Mg(2+) binding site. Lysine 462 serves as a coordination point for (6S)-5-formyl-5,6,7,8-tetrahydrofolate.

This sequence belongs to the TRAFAC class TrmE-Era-EngA-EngB-Septin-like GTPase superfamily. TrmE GTPase family. As to quaternary structure, homodimer. Heterotetramer of two MnmE and two MnmG subunits. K(+) serves as cofactor.

It localises to the cytoplasm. Its function is as follows. Exhibits a very high intrinsic GTPase hydrolysis rate. Involved in the addition of a carboxymethylaminomethyl (cmnm) group at the wobble position (U34) of certain tRNAs, forming tRNA-cmnm(5)s(2)U34. In Acinetobacter baylyi (strain ATCC 33305 / BD413 / ADP1), this protein is tRNA modification GTPase MnmE.